Here is a 206-residue protein sequence, read N- to C-terminus: Protein YmaB (206 aa).

The sequence is that of Protein YmaB (ymaB) from Bacillus subtilis (strain 168).